Here is a 166-residue protein sequence, read N- to C-terminus: Large ribosomal subunit protein uL10 (166 aa).

Belongs to the universal ribosomal protein uL10 family. In terms of assembly, part of the ribosomal stalk of the 50S ribosomal subunit. The N-terminus interacts with L11 and the large rRNA to form the base of the stalk. The C-terminus forms an elongated spine to which L12 dimers bind in a sequential fashion forming a multimeric L10(L12)X complex.

In terms of biological role, forms part of the ribosomal stalk, playing a central role in the interaction of the ribosome with GTP-bound translation factors. This is Large ribosomal subunit protein uL10 from Shewanella denitrificans (strain OS217 / ATCC BAA-1090 / DSM 15013).